The following is a 288-amino-acid chain: Acetyl-coenzyme A carboxylase carboxyl transferase subunit beta (288 aa).

A CoA carboxyltransferase N-terminal domain is found at Leu32–Val288. Residues Cys36, Cys39, Cys54, and Cys57 each contribute to the Zn(2+) site. The segment at Cys36–Cys57 adopts a C4-type zinc-finger fold.

It belongs to the AccD/PCCB family. Acetyl-CoA carboxylase is a heterohexamer composed of biotin carboxyl carrier protein (AccB), biotin carboxylase (AccC) and two subunits each of ACCase subunit alpha (AccA) and ACCase subunit beta (AccD). Requires Zn(2+) as cofactor.

The protein localises to the cytoplasm. It carries out the reaction N(6)-carboxybiotinyl-L-lysyl-[protein] + acetyl-CoA = N(6)-biotinyl-L-lysyl-[protein] + malonyl-CoA. Its pathway is lipid metabolism; malonyl-CoA biosynthesis; malonyl-CoA from acetyl-CoA: step 1/1. Component of the acetyl coenzyme A carboxylase (ACC) complex. Biotin carboxylase (BC) catalyzes the carboxylation of biotin on its carrier protein (BCCP) and then the CO(2) group is transferred by the transcarboxylase to acetyl-CoA to form malonyl-CoA. The polypeptide is Acetyl-coenzyme A carboxylase carboxyl transferase subunit beta (Lactococcus lactis subsp. lactis (strain IL1403) (Streptococcus lactis)).